A 122-amino-acid polypeptide reads, in one-letter code: Acidic phospholipase A2 CbIalpha (122 aa).

7 disulfides stabilise this stretch: Cys-26–Cys-115, Cys-28–Cys-44, Cys-43–Cys-95, Cys-49–Cys-122, Cys-50–Cys-88, Cys-57–Cys-81, and Cys-75–Cys-86. Positions 27, 29, and 31 each coordinate Ca(2+). His-47 is an active-site residue. Asp-48 is a Ca(2+) binding site. Asp-89 is a catalytic residue.

It belongs to the phospholipase A2 family. Group II subfamily. D49 sub-subfamily. In terms of assembly, heterodimer of an acidic subunit (CbIalpha or CbIbeta) and a basic subunit (CbII). The acidic subunit is non-toxic, and increases the toxicity of the basic subunit. The cofactor is Ca(2+). As to expression, expressed by the venom gland.

It is found in the secreted. It catalyses the reaction a 1,2-diacyl-sn-glycero-3-phosphocholine + H2O = a 1-acyl-sn-glycero-3-phosphocholine + a fatty acid + H(+). Functionally, heterodimer: presynaptic neurotoxin. Monomer: Snake venom phospholipase A2 (PLA2) is inactive towards micellar phosphatidylcholine but is weakly active towards non-micellar dithiolecithin. PLA2 catalyzes the calcium-dependent hydrolysis of the 2-acyl groups in 3-sn-phosphoglycerides. In Pseudocerastes fieldi (Field's horned viper), this protein is Acidic phospholipase A2 CbIalpha.